The sequence spans 314 residues: MKQYLDLEKYVLENGTQKGDRTGTGTISTFGYQMRFDLQEGFPIMTTKRVPFKLVVSELLWFLHGDTNIRYLLQHNNNIWNEWAFERFVKSDDYKGEDMTDFGLRAERDSAFKEVYQAEMEKFKARILEDEAFANKYGELGNIYGKQWREWKTSQGETIDQLADLIEMIKTNPNSRRLIVSAWNPEDIPNMALPPCHSLFQFYVADGKLSCQLYQRSADIFLGVPFNIASYALLTHLIAREVGLEVGEFIHTMGDAHLYNNHIEQVKEQLSRTPHKLPKLVLSDKPATIFDFDVADISLDGYNPDPAIKAPISV.

DUMP-binding positions include R21 and 176 to 177 (RR). The active-site Nucleophile is C196. DUMP is bound by residues 216–219 (RSAD), N227, and 257–259 (HLY). D219 serves as a coordination point for (6R)-5,10-methylene-5,6,7,8-tetrahydrofolate. S313 is a (6R)-5,10-methylene-5,6,7,8-tetrahydrofolate binding site.

This sequence belongs to the thymidylate synthase family. Bacterial-type ThyA subfamily. In terms of assembly, homodimer.

It is found in the cytoplasm. The enzyme catalyses dUMP + (6R)-5,10-methylene-5,6,7,8-tetrahydrofolate = 7,8-dihydrofolate + dTMP. It participates in pyrimidine metabolism; dTTP biosynthesis. Its function is as follows. Catalyzes the reductive methylation of 2'-deoxyuridine-5'-monophosphate (dUMP) to 2'-deoxythymidine-5'-monophosphate (dTMP) while utilizing 5,10-methylenetetrahydrofolate (mTHF) as the methyl donor and reductant in the reaction, yielding dihydrofolate (DHF) as a by-product. This enzymatic reaction provides an intracellular de novo source of dTMP, an essential precursor for DNA biosynthesis. This Listeria monocytogenes serotype 4b (strain F2365) protein is Thymidylate synthase.